We begin with the raw amino-acid sequence, 386 residues long: Succinate--CoA ligase [ADP-forming] subunit beta (386 aa).

ATP-binding positions include Lys46, 53–55 (GRG), Glu99, Gln102, and Glu107. Mg(2+)-binding residues include Asn199 and Asp213. Residues Asn264 and 321–323 (GIV) contribute to the substrate site.

This sequence belongs to the succinate/malate CoA ligase beta subunit family. Heterotetramer of two alpha and two beta subunits. Mg(2+) serves as cofactor.

The enzyme catalyses succinate + ATP + CoA = succinyl-CoA + ADP + phosphate. The catalysed reaction is GTP + succinate + CoA = succinyl-CoA + GDP + phosphate. Its pathway is carbohydrate metabolism; tricarboxylic acid cycle; succinate from succinyl-CoA (ligase route): step 1/1. Its function is as follows. Succinyl-CoA synthetase functions in the citric acid cycle (TCA), coupling the hydrolysis of succinyl-CoA to the synthesis of either ATP or GTP and thus represents the only step of substrate-level phosphorylation in the TCA. The beta subunit provides nucleotide specificity of the enzyme and binds the substrate succinate, while the binding sites for coenzyme A and phosphate are found in the alpha subunit. In Ruthia magnifica subsp. Calyptogena magnifica, this protein is Succinate--CoA ligase [ADP-forming] subunit beta.